Consider the following 721-residue polypeptide: Mitogen-activated protein kinase 6 (721 aa).

A Peptide (Met-Gly) (interchain with G-Cter in ubiquitin) cross-link involves residue Met1. Residues 20–316 form the Protein kinase domain; that stretch reads YMDLKPLGCG…AEEALSHPYM (297 aa). Residues 26 to 34 and Lys49 contribute to the ATP site; that span reads LGCGGNGLV. The Proton acceptor role is filled by Asp152. Ser189 bears the Phosphoserine; by PAK1, PAK2 and PAK3 mark. Residues 189 to 191 carry the SEG motif motif; it reads SEG. An FRIEDE motif motif is present at residues 332–337; the sequence is FHIEDE. Residues Ser386, Ser452, Ser556, Ser558, Ser665, and Ser684 each carry the phosphoserine modification. Over residues 701-715 the composition is skewed to polar residues; sequence AMKSSPQIPHQTYSS. The tract at residues 701–721 is disordered; sequence AMKSSPQIPHQTYSSILKHLN.

The protein belongs to the protein kinase superfamily. CMGC Ser/Thr protein kinase family. MAP kinase subfamily. Heterodimer with ERK4/MAPK4. Interacts with (via FRIEDE motif) MAPKAPK5. Interacts with UBE3A; this interaction may be indirect and mediated by HERC2, possibly via HERC2 interaction with NEURL4. Requires Mg(2+) as cofactor. Phosphorylated at Ser-189 by PAK1, PAK2 and PAK3 resulting in catalytic activation. Phosphorylated by MAPKAPK5 at other sites. In terms of processing, ubiquitination at Met-1 leads to degradation by the proteasome pathway.

Its subcellular location is the cytoplasm. The protein resides in the nucleus. The catalysed reaction is L-seryl-[protein] + ATP = O-phospho-L-seryl-[protein] + ADP + H(+). The enzyme catalyses L-threonyl-[protein] + ATP = O-phospho-L-threonyl-[protein] + ADP + H(+). Activated by phosphorylation at Ser-189. Functionally, atypical MAPK protein. Phosphorylates microtubule-associated protein 2 (MAP2) and MAPKAPK5. The precise role of the complex formed with MAPKAPK5 is still unclear, but the complex follows a complex set of phosphorylation events: upon interaction with atypical MAPKAPK5, ERK3/MAPK6 is phosphorylated at Ser-189 and then mediates phosphorylation and activation of MAPKAPK5, which in turn phosphorylates ERK3/MAPK6. May promote entry in the cell cycle. This is Mitogen-activated protein kinase 6 (MAPK6) from Pongo abelii (Sumatran orangutan).